Consider the following 527-residue polypeptide: Nucleus accumbens-associated protein 1 (527 aa).

The 65-residue stretch at 30–94 (CDVSVVVKGH…CYTGRLSMNV (65 aa)) folds into the BTB domain. The tract at residues 131 to 153 (QGLHAEEAPSSEPQSPVAQTSGW) is disordered. Polar residues predominate over residues 141 to 152 (SEPQSPVAQTSG). Lys167 is covalently cross-linked (Glycyl lysine isopeptide (Lys-Gly) (interchain with G-Cter in SUMO1); alternate). Lys167 is covalently cross-linked (Glycyl lysine isopeptide (Lys-Gly) (interchain with G-Cter in SUMO2); alternate). Lys183 participates in a covalent cross-link: Glycyl lysine isopeptide (Lys-Gly) (interchain with G-Cter in SUMO2). The residue at position 188 (Ser188) is a Phosphoserine. The segment at 210-292 (DLAANRPHQP…DEEEDGGEEG (83 aa)) is disordered. Residues 225-251 (APVVAAAQPAVAAGAGQPAGGVAAAGG) show a composition bias toward low complexity. Residues 255–277 (GPSTSERTSPGTSSAYTSDSPGS) are compositionally biased toward polar residues. Phosphoserine; by PKC is present on Ser259. The segment covering 281 to 292 (EEDEEEDGGEEG) has biased composition (acidic residues). Glycyl lysine isopeptide (Lys-Gly) (interchain with G-Cter in SUMO2) cross-links involve residues Lys318, Lys452, Lys480, Lys483, and Lys498. The BEN domain maps to 374–471 (GTNVYITRAQ…DMCTNARRVV (98 aa)).

In terms of assembly, homooligomer; mediated by the BTB domain. Interacts with HDAC3 and HDAC4. Interacts (via BTB domain) with CUL3, PSMD7 and RCOR1. As to expression, overexpressed in several types of carcinomas including ovarian serous carcinomas. Expression levels positively correlate with tumor recurrence in ovarian serous carcinomas, and intense immunoreactivity in primary ovarian tumors predicts early recurrence. Up-regulated in ovarian carcinomas after chemotherapy, suggesting a role in development of chemotherapy resistance in ovarian cancer.

Its subcellular location is the nucleus. The protein resides in the cytoplasm. Functions as a transcriptional repressor. Seems to function as a transcriptional corepressor in neuronal cells through recruitment of HDAC3 and HDAC4. Contributes to tumor progression, and tumor cell proliferation and survival. This may be mediated at least in part through repressing transcriptional activity of GADD45GIP1. Required for recruiting the proteasome from the nucleus to the cytoplasm and dendritic spines. This Homo sapiens (Human) protein is Nucleus accumbens-associated protein 1 (NACC1).